The chain runs to 414 residues: COUP transcription factor 2 (414 aa).

A disordered region spans residues 1-72 (MAMVVSTWRD…PGGPGSDKQQ (72 aa)). A compositionally biased stretch (pro residues) spans 27 to 37 (PPVPGPPPGAP). Low complexity predominate over residues 38-54 (HTPQTPGQGGPASTPAQ). A Phosphothreonine modification is found at T51. The segment at residues 76-151 (HIECVVCGDK…VGMRREAVQR (76 aa)) is a DNA-binding region (nuclear receptor). NR C4-type zinc fingers lie at residues 79-99 (CVVCGDKSSGKHYGQFTCEGC) and 115-139 (CRANRNCPIDQHHRNQCQYCRLKKC). The tract at residues 117 to 414 (ANRNCPIDQH…SFNWPYMAIQ (298 aa)) is interaction with ZFPM2. The NR LBD domain maps to 177 to 403 (YLSGYISLLL…TLIRDMLLSG (227 aa)). The interval 337–414 (LQEKSQCALE…SFNWPYMAIQ (78 aa)) is important for dimerization.

The protein belongs to the nuclear hormone receptor family. NR2 subfamily. In terms of assembly, interacts with SQSTM1. Binds DNA as a dimer; homodimer or heterodimer with NR2F6. Interacts with NCOA1, NCOA2, NCOA3 and PPARGC1A. Interacts with ZFPM2.

The protein resides in the nucleus. In terms of biological role, ligand-activated transcription factor. Activated by high concentrations of 9-cis-retinoic acid and all-trans-retinoic acid, but not by dexamethasone, cortisol or progesterone (in vitro). Regulation of the apolipoprotein A-I gene transcription. Binds to DNA site A. May be required to establish ovary identity during early gonad development. The polypeptide is COUP transcription factor 2 (Nr2f2) (Rattus norvegicus (Rat)).